The primary structure comprises 344 residues: Ferrochelatase (344 aa).

His-214 and Glu-295 together coordinate Fe cation.

This sequence belongs to the ferrochelatase family.

Its subcellular location is the cytoplasm. It catalyses the reaction heme b + 2 H(+) = protoporphyrin IX + Fe(2+). It participates in porphyrin-containing compound metabolism; protoheme biosynthesis; protoheme from protoporphyrin-IX: step 1/1. In terms of biological role, catalyzes the ferrous insertion into protoporphyrin IX. The sequence is that of Ferrochelatase from Rhizobium etli (strain ATCC 51251 / DSM 11541 / JCM 21823 / NBRC 15573 / CFN 42).